The following is a 317-amino-acid chain: Glycine--tRNA ligase alpha subunit (317 aa).

Belongs to the class-II aminoacyl-tRNA synthetase family. In terms of assembly, tetramer of two alpha and two beta subunits.

The protein localises to the cytoplasm. The catalysed reaction is tRNA(Gly) + glycine + ATP = glycyl-tRNA(Gly) + AMP + diphosphate. This is Glycine--tRNA ligase alpha subunit from Pseudomonas fluorescens (strain ATCC BAA-477 / NRRL B-23932 / Pf-5).